The chain runs to 344 residues: UDP-3-O-acylglucosamine N-acyltransferase (344 aa).

Catalysis depends on H236, which acts as the Proton acceptor.

Belongs to the transferase hexapeptide repeat family. LpxD subfamily. Homotrimer.

The enzyme catalyses a UDP-3-O-[(3R)-3-hydroxyacyl]-alpha-D-glucosamine + a (3R)-hydroxyacyl-[ACP] = a UDP-2-N,3-O-bis[(3R)-3-hydroxyacyl]-alpha-D-glucosamine + holo-[ACP] + H(+). It functions in the pathway bacterial outer membrane biogenesis; LPS lipid A biosynthesis. Functionally, catalyzes the N-acylation of UDP-3-O-acylglucosamine using 3-hydroxyacyl-ACP as the acyl donor. Is involved in the biosynthesis of lipid A, a phosphorylated glycolipid that anchors the lipopolysaccharide to the outer membrane of the cell. This is UDP-3-O-acylglucosamine N-acyltransferase from Nitratidesulfovibrio vulgaris (strain ATCC 29579 / DSM 644 / CCUG 34227 / NCIMB 8303 / VKM B-1760 / Hildenborough) (Desulfovibrio vulgaris).